Consider the following 74-residue polypeptide: DNA-directed RNA polymerase subunit omega (74 aa).

It belongs to the RNA polymerase subunit omega family. In terms of assembly, the RNAP catalytic core consists of 2 alpha, 1 beta, 1 beta' and 1 omega subunit. When a sigma factor is associated with the core the holoenzyme is formed, which can initiate transcription.

It catalyses the reaction RNA(n) + a ribonucleoside 5'-triphosphate = RNA(n+1) + diphosphate. Functionally, promotes RNA polymerase assembly. Latches the N- and C-terminal regions of the beta' subunit thereby facilitating its interaction with the beta and alpha subunits. This Helicobacter pylori (strain P12) protein is DNA-directed RNA polymerase subunit omega.